The following is a 149-amino-acid chain: MIETLYNLPFHILVPPNIKVRRFSIPMPSPMAVFSVILFSYFLVTGGIIYDVIVEPPSLGATVDEHGHSRPVAFMPYRVNGQYIMEGLASSFLFTVGGLGFIIMDQTHTPGKTNLNRLLLTAMGFIFILVSFFTTWLFMRMKLPSYLQP.

The Cytoplasmic segment spans residues 1 to 32; that stretch reads MIETLYNLPFHILVPPNIKVRRFSIPMPSPMA. A helical membrane pass occupies residues 33 to 53; sequence VFSVILFSYFLVTGGIIYDVI. At 54–83 the chain is on the extracellular side; sequence VEPPSLGATVDEHGHSRPVAFMPYRVNGQY. The chain crosses the membrane as a helical span at residues 84–104; sequence IMEGLASSFLFTVGGLGFIIM. Residues 105-117 lie on the Cytoplasmic side of the membrane; it reads DQTHTPGKTNLNR. The helical transmembrane segment at 118–138 threads the bilayer; the sequence is LLLTAMGFIFILVSFFTTWLF. Over 139-149 the chain is Extracellular; that stretch reads MRMKLPSYLQP.

The protein belongs to the OSTC family. Component of the oligosaccharyltransferase (OST) complex.

It localises to the membrane. Its function is as follows. Subunit of the oligosaccharyl transferase (OST) complex that catalyzes the initial transfer of a defined glycan (Glc(3)Man(9)GlcNAc(2) in eukaryotes) from the lipid carrier dolichol-pyrophosphate to an asparagine residue within an Asn-X-Ser/Thr consensus motif in nascent polypeptide chains, the first step in protein N-glycosylation. N-glycosylation occurs cotranslationally and the complex associates with the Sec61 complex at the channel-forming translocon complex that mediates protein translocation across the endoplasmic reticulum (ER). All subunits are required for a maximal enzyme activity. The protein is Putative oligosaccharyltransferase complex subunit CG9662 of Drosophila melanogaster (Fruit fly).